The primary structure comprises 364 residues: Probable G-protein coupled receptor AH9.4 (364 aa).

Methionine 1 is a topological domain (extracellular). A helical transmembrane segment spans residues 2–22 (AFLQSAYLVMVFTVPIAGVIL). Over 23 to 48 (NTYVLRKLIRVARKSVVRFETTSGLP) the chain is Cytoplasmic. A helical membrane pass occupies residues 49-69 (LAAMSVGDSITLCALLMQAIF). The Extracellular segment spans residues 70–89 (HITPKGEVPTVVLSSICKFG). The chain crosses the membrane as a helical span at residues 90 to 110 (IFLIHSTSAFSVWCWFFLSVL). At 111-130 (RYIAVFHPFKYRTIWRQPRN) the chain is on the cytoplasmic side. The chain crosses the membrane as a helical span at residues 131 to 151 (ALKFLAGAVGMFQIYTLIFVT). Over 152–177 (YRQEEKSCGEYDVFHESAFKHVHLLD) the chain is Extracellular. A helical transmembrane segment spans residues 178–198 (IFLFYAIPSLLRITLDFLVLI). Topologically, residues 199–277 (HCYSPFSVEG…KKKTAMVMRS (79 aa)) are cytoplasmic. The helical transmembrane segment at 278–298 (ILISVLNLLLNLPSHIFRAWA) threads the bilayer. The Extracellular portion of the chain corresponds to 299-315 (SYDESSLENEIVRTLEP). A helical transmembrane segment spans residues 316 to 336 (IAQMMYFSQFACNAFYLATSI). Residues 337 to 364 (YETNGSPRNTVISSSNRHVSRCISDDEA) lie on the Cytoplasmic side of the membrane.

Belongs to the G-protein coupled receptor 1 family.

Its subcellular location is the cell membrane. Functionally, not known. Putative receptor. In Caenorhabditis elegans, this protein is Probable G-protein coupled receptor AH9.4.